The following is a 328-amino-acid chain: uncharacterized protein (328 aa).

A signal peptide spans Met-1–Ala-25.

It belongs to the bacterial solute-binding protein 7 family.

The protein resides in the periplasm. This is an uncharacterized protein from Haemophilus influenzae (strain ATCC 51907 / DSM 11121 / KW20 / Rd).